Reading from the N-terminus, the 1019-residue chain is Limulus clotting factor C (1019 aa).

Positions M1–S25 are cleaved as a signal peptide. The 36-residue stretch at Y102–E137 folds into the EGF-like domain. Disulfide bonds link C106–C118, C112–C125, C127–C136, C142–C182, C168–C195, C199–C241, C227–C254, C260–C308, C294–C321, C331–C350, C354–C374, C436–C447, C464–C564, C538–C556, C576–C621, C607–C634, and C720–C748. 3 consecutive Sushi domains span residues K140–R197, E198–N256, and V258–K323. Residues A325–F421 form the LCCL domain. The C-type lectin domain maps to C436 to L568. N-linked (GlcNAc...) asparagine glycans are attached at residues N523 and N534. Sushi domains lie at A574–K636 and P689–P750. N-linked (GlcNAc...) asparagine glycosylation is found at N624, N740, and N767. A Peptidase S1 domain is found at I763–I1019. A disulfide bridge links C794 with C810. Residues H809 and D865 each act as charge relay system in the active site. N912 is a glycosylation site (N-linked (GlcNAc...) asparagine). Residues C932 and C951 are joined by a disulfide bond. D960 contacts substrate. C962 and C996 form a disulfide bridge. The active-site Charge relay system is the S966.

Belongs to the peptidase S1 family. In terms of assembly, heterodimer of a light chain and a heavy chain linked by a disulfide bond.

Its subcellular location is the secreted. It carries out the reaction Selective cleavage of 103-Arg-|-Ser-104 and 124-Ile-|-Ile-125 bonds in Limulus clotting factor B to form activated factor B. Cleavage of -Pro-Arg-|-Xaa- bonds in synthetic substrates.. With respect to regulation, activated by Gram-negative bacterial lipopolysaccharides and chymotrypsin. This enzyme is closely associated with an endotoxin-sensitive hemolymph coagulation system which may play important roles in both hemostasis and host defense mechanisms. Its active form catalyzes the activation of factor B. The polypeptide is Limulus clotting factor C (Carcinoscorpius rotundicauda (Mangrove horseshoe crab)).